Reading from the N-terminus, the 332-residue chain is 5-dehydro-2-deoxygluconokinase (332 aa).

It belongs to the carbohydrate kinase PfkB family.

The catalysed reaction is 5-dehydro-2-deoxy-D-gluconate + ATP = 6-phospho-5-dehydro-2-deoxy-D-gluconate + ADP + H(+). It participates in polyol metabolism; myo-inositol degradation into acetyl-CoA; acetyl-CoA from myo-inositol: step 5/7. Catalyzes the phosphorylation of 5-dehydro-2-deoxy-D-gluconate (2-deoxy-5-keto-D-gluconate or DKG) to 6-phospho-5-dehydro-2-deoxy-D-gluconate (DKGP). This Bacillus thuringiensis subsp. konkukian (strain 97-27) protein is 5-dehydro-2-deoxygluconokinase.